A 321-amino-acid chain; its full sequence is Glucokinase (321 aa).

8-13 contributes to the ATP binding site; it reads GDVGGT.

Belongs to the bacterial glucokinase family.

The protein resides in the cytoplasm. It carries out the reaction D-glucose + ATP = D-glucose 6-phosphate + ADP + H(+). The polypeptide is Glucokinase (Salmonella choleraesuis (strain SC-B67)).